A 307-amino-acid chain; its full sequence is Homoserine kinase (307 aa).

91–101 (PLARGLGSSAA) lines the ATP pocket.

It belongs to the GHMP kinase family. Homoserine kinase subfamily.

It localises to the cytoplasm. The catalysed reaction is L-homoserine + ATP = O-phospho-L-homoserine + ADP + H(+). The protein operates within amino-acid biosynthesis; L-threonine biosynthesis; L-threonine from L-aspartate: step 4/5. Catalyzes the ATP-dependent phosphorylation of L-homoserine to L-homoserine phosphate. The polypeptide is Homoserine kinase (Deinococcus radiodurans (strain ATCC 13939 / DSM 20539 / JCM 16871 / CCUG 27074 / LMG 4051 / NBRC 15346 / NCIMB 9279 / VKM B-1422 / R1)).